The chain runs to 500 residues: Probable malate:quinone oxidoreductase (500 aa).

It belongs to the MQO family. The cofactor is FAD.

The enzyme catalyses (S)-malate + a quinone = a quinol + oxaloacetate. Its pathway is carbohydrate metabolism; tricarboxylic acid cycle; oxaloacetate from (S)-malate (quinone route): step 1/1. The sequence is that of Probable malate:quinone oxidoreductase from Bacillus cereus (strain ATCC 10987 / NRS 248).